The primary structure comprises 186 residues: Negative modulator of initiation of replication (186 aa).

This sequence belongs to the SeqA family. As to quaternary structure, homodimer. Polymerizes to form helical filaments.

It is found in the cytoplasm. Negative regulator of replication initiation, which contributes to regulation of DNA replication and ensures that replication initiation occurs exactly once per chromosome per cell cycle. Binds to pairs of hemimethylated GATC sequences in the oriC region, thus preventing assembly of replication proteins and re-initiation at newly replicated origins. Repression is relieved when the region becomes fully methylated. This Haemophilus ducreyi (strain 35000HP / ATCC 700724) protein is Negative modulator of initiation of replication.